The sequence spans 49 residues: uncharacterized protein (49 aa).

The helical transmembrane segment at 22–42 (AIVGISIMIIIAIGIYLIIEY) threads the bilayer.

Its subcellular location is the membrane. This is an uncharacterized protein from Methanocaldococcus jannaschii (strain ATCC 43067 / DSM 2661 / JAL-1 / JCM 10045 / NBRC 100440) (Methanococcus jannaschii).